Reading from the N-terminus, the 218-residue chain is Dehydration-responsive element-binding protein 1B (218 aa).

The disordered stretch occupies residues 1 to 26; the sequence is MEVEEAAYRTVWSEPPKRPAGRTKFR. Residues 32–95 constitute a DNA-binding region (AP2/ERF); sequence VYRGVRRRGG…RGRAACLNFA (64 aa). Residues 131–151 form a disordered region; that stretch reads SAAPSSPAETFANDGDEEEDN.

It belongs to the AP2/ERF transcription factor family. ERF subfamily.

The protein resides in the nucleus. In terms of biological role, transcriptional activator that binds specifically to the DNA sequence 5'-[AG]CCGAC-3'. Binding to the C-repeat/DRE element mediates high salinity- and dehydration-inducible transcription. Confers resistance to high salt, cold and drought stress. The protein is Dehydration-responsive element-binding protein 1B (DREB1B) of Oryza sativa subsp. japonica (Rice).